Here is a 670-residue protein sequence, read N- to C-terminus: UvrABC system protein B (670 aa).

A Helicase ATP-binding domain is found at 26–183; the sequence is EGLENGLAHQ…RRLSELQYSR (158 aa). 39–46 lines the ATP pocket; sequence GVTGSGKT. The Beta-hairpin motif lies at 92–115; the sequence is YYDYYQPEAYVPSSDTFIEKDASV. Residues 431 to 597 form the Helicase C-terminal domain; that stretch reads QVDDLLSEIR…GLNKKIGDIL (167 aa). The interval 600-620 is disordered; it reads GQPSTRGKGKGRGGKVADTNN. The UVR domain maps to 630–665; sequence DQKIRELEAKMYTHAQNLEFEQAAELRDQVHQLRQQ.

The protein belongs to the UvrB family. Forms a heterotetramer with UvrA during the search for lesions. Interacts with UvrC in an incision complex.

Its subcellular location is the cytoplasm. Functionally, the UvrABC repair system catalyzes the recognition and processing of DNA lesions. A damage recognition complex composed of 2 UvrA and 2 UvrB subunits scans DNA for abnormalities. Upon binding of the UvrA(2)B(2) complex to a putative damaged site, the DNA wraps around one UvrB monomer. DNA wrap is dependent on ATP binding by UvrB and probably causes local melting of the DNA helix, facilitating insertion of UvrB beta-hairpin between the DNA strands. Then UvrB probes one DNA strand for the presence of a lesion. If a lesion is found the UvrA subunits dissociate and the UvrB-DNA preincision complex is formed. This complex is subsequently bound by UvrC and the second UvrB is released. If no lesion is found, the DNA wraps around the other UvrB subunit that will check the other stand for damage. The protein is UvrABC system protein B of Yersinia enterocolitica serotype O:8 / biotype 1B (strain NCTC 13174 / 8081).